Reading from the N-terminus, the 347-residue chain is Ferrochelatase (347 aa).

Histidine 193 and glutamate 273 together coordinate Fe cation.

It belongs to the ferrochelatase family.

It localises to the cytoplasm. It catalyses the reaction heme b + 2 H(+) = protoporphyrin IX + Fe(2+). The protein operates within porphyrin-containing compound metabolism; protoheme biosynthesis; protoheme from protoporphyrin-IX: step 1/1. Catalyzes the ferrous insertion into protoporphyrin IX. In Rickettsia canadensis (strain McKiel), this protein is Ferrochelatase.